A 107-amino-acid chain; its full sequence is MMRGNIAQLMQQAQKMQENLQRAQEELAKLEVTGSAGGSMVSVILSGTKECRKVRIDPSILNDQEMIEDLIAAAFNDASNKVDAESKERMGSATLGMSLPPGFKLPF.

This sequence belongs to the YbaB/EbfC family. As to quaternary structure, homodimer.

The protein localises to the cytoplasm. Its subcellular location is the nucleoid. Its function is as follows. Binds to DNA and alters its conformation. May be involved in regulation of gene expression, nucleoid organization and DNA protection. In Xylella fastidiosa (strain M12), this protein is Nucleoid-associated protein Xfasm12_1216.